We begin with the raw amino-acid sequence, 324 residues long: Stomatin-like protein stl-1 (324 aa).

This sequence belongs to the band 7/mec-2 family. Widely expressed in most tissues, including body wall muscles, intestinal epithelia, and pharynx and head neurons.

Its subcellular location is the mitochondrion. Functionally, mitochondrial protein that probably regulates the biogenesis and the activity of mitochondria. In neurons, involved in mitochondrial fusion and recovery of normal locomotory behavior during reoxygenation; probably acts independently of egl-9 and the canonical hypoxia response pathway. This Caenorhabditis elegans protein is Stomatin-like protein stl-1.